A 73-amino-acid chain; its full sequence is Large ribosomal subunit protein uL30 (73 aa).

This sequence belongs to the universal ribosomal protein uL30 family. Part of the 50S ribosomal subunit.

This Borrelia hermsii (strain HS1 / DAH) protein is Large ribosomal subunit protein uL30.